We begin with the raw amino-acid sequence, 298 residues long: Ketohexokinase (298 aa).

Beta-D-fructose is bound by residues Asp15, Gly41, Asn42, and Asn45. ATP contacts are provided by residues Arg108, 226–229 (AEEG), and 255–258 (GAGD). Asp258 lines the beta-D-fructose pocket.

Belongs to the carbohydrate kinase PfkB family. In terms of assembly, homodimer.

It carries out the reaction beta-D-fructose + ATP = beta-D-fructose 1-phosphate + ADP + H(+). It functions in the pathway carbohydrate metabolism; fructose metabolism. With respect to regulation, requires potassium. Inhibition by ADP. Catalyzes the phosphorylation of the ketose sugar fructose to fructose-1-phosphate. This is Ketohexokinase from Mus musculus (Mouse).